Reading from the N-terminus, the 161-residue chain is Interleukin-17F (161 aa).

The first 28 residues, 1 to 28 (MKCTRETAMVKSLLLLMLGLAILREVAA), serve as a signal peptide directing secretion. The N-linked (GlcNAc...) asparagine glycan is linked to Asn-83. 2 cysteine pairs are disulfide-bonded: Cys-100–Cys-150 and Cys-105–Cys-152.

This sequence belongs to the IL-17 family. In terms of assembly, homodimer; disulfide-linked. Heterodimer with IL17A (IL17A-IL17F). Forms complexes with IL17RA and IL17RC receptors with 2:1 binding stoichiometry: two receptor chains for one interleukin molecule. IL17F homodimer forms predominantly complexes with IL17RC homodimer, whereas IL17A-IL17F favors complexes with IL17RA-IL17RC. IL17RA and IL17RC chains cannot distinguish between IL17A and IL17F molecules, potentially enabling the formation of topologically distinct complexes. In terms of tissue distribution, expressed by T-helper 17 cells (Th17) (at protein level). The expression pattern reflects the differentiation state. In fully differentiated Th17 cells, IL17A-IL17F heterodimers are produced at higher levels than IL17A-IL17A and IL17F-IL17F dimers. Dominantly secreted in intestine. Expressed by resident cells of the lamina propria, both epithelial cells and immune cell subsets including natural killer cells, dendritic cells, macrophages and various T and B cell subsets. Expressed by epithelial cells and innate immune cells in the colon. Expressed in group 3 innate lymphoid cells.

The protein resides in the secreted. Effector cytokine of innate and adaptive immune system involved in antimicrobial host defense and maintenance of tissue integrity. IL17A-IL17F signals via IL17RA-IL17RC heterodimeric receptor complex, triggering homotypic interaction of IL17RA and IL17RC chains with TRAF3IP2 adapter through SEFIR domains. This leads to downstream TRAF6-mediated activation of NF-kappa-B and MAPkinase pathways ultimately resulting in transcriptional activation of cytokines, chemokines, antimicrobial peptides and matrix metalloproteinases, with potential strong immune inflammation. IL17A-IL17F is primarily involved in host defense against extracellular bacteria and fungi by inducing neutrophilic inflammation. As signature effector cytokine of T-helper 17 cells (Th17), primarily induces neutrophil activation and recruitment at infection and inflammatory sites. Stimulates the production of antimicrobial beta-defensins DEFB1, DEFB103A, and DEFB104A by mucosal epithelial cells, limiting the entry of microbes through the epithelial barriers. IL17F homodimer can signal via IL17RC homodimeric receptor complex, triggering downstream activation of TRAF6 and NF-kappa-B signaling pathway. Via IL17RC induces transcriptional activation of IL33, a potent cytokine that stimulates group 2 innate lymphoid cells and adaptive T-helper 2 cells involved in pulmonary allergic response to fungi. Likely via IL17RC, promotes sympathetic innervation of peripheral organs by coordinating the communication between gamma-delta T cells and parenchymal cells. Stimulates sympathetic innervation of thermogenic adipose tissue by driving TGFB1 expression. Regulates the composition of intestinal microbiota and immune tolerance by inducing antimicrobial proteins that specifically control the growth of commensal Firmicutes and Bacteroidetes. The protein is Interleukin-17F (Il17f) of Mus musculus (Mouse).